A 456-amino-acid polypeptide reads, in one-letter code: MFLLLPFDSLIVNLLGISLTVLFTLLLVFIIVPAIFGVSFGIRKLYMKSLLKIFAWATLRMERGAKEKNHQLYKPYTNGIIAKDPTSLEEEIKEIRRSGSSKALDNTPEFELSDIFYFCRKGMETIMDDEVTKRFSAEELESWNLLSRTNYNFQYISLRLTVLWGLGVLIRYCFLLPLRIALAFTGISLLVVGTTVVGYLPNGRFKEFMSKHVHLMCYRICVRALTAIITYHDRENRPRNGGICVANHTSPIDVIILASDGYYAMVGQVHGGLMGVIQRAMVKACPHVWFERSEVKDRHLVAKRLTEHVQDKSKLPILIFPEGTCINNTSVMMFKKGSFEIGATVYPVAIKYDPQFGDAFWNSSKYGMVTYLLRMMTSWAIVCSVWYLPPMTREADEDAVQFANRVKSAIARQGGLVDLLWDGGLKREKVKDTFKEEQQKLYSKMIVGNHKDRSRS.

Residues 1–37 (MFLLLPFDSLIVNLLGISLTVLFTLLLVFIIVPAIFG) form the signal peptide. 2 consecutive transmembrane segments (helical) span residues 156-176 (ISLR…CFLL) and 180-200 (IALA…VGYL). N-linked (GlcNAc...) asparagine glycosylation occurs at Asn-247. An HXXXXD motif motif is present at residues 248 to 253 (HTSPID). N-linked (GlcNAc...) asparagine glycosylation is found at Asn-327, Asn-328, and Asn-362.

It belongs to the 1-acyl-sn-glycerol-3-phosphate acyltransferase family. As to expression, ubiquitous. High levels in testis. Relatively high level of expression in skeletal muscle and heart. Relatively low level of expression in lung.

It localises to the endoplasmic reticulum membrane. It carries out the reaction sn-glycerol 3-phosphate + an acyl-CoA = a 1-acyl-sn-glycero-3-phosphate + CoA. It catalyses the reaction dodecanoyl-CoA + sn-glycerol 3-phosphate = 1-dodecanoyl-sn-glycerol 3-phosphate + CoA. The enzyme catalyses sn-glycerol 3-phosphate + hexadecanoyl-CoA = 1-hexadecanoyl-sn-glycero-3-phosphate + CoA. The catalysed reaction is sn-glycerol 3-phosphate + octadecanoyl-CoA = 1-octadecanoyl-sn-glycero-3-phosphate + CoA. It carries out the reaction sn-glycerol 3-phosphate + (9Z)-octadecenoyl-CoA = 1-(9Z-octadecenoyl)-sn-glycero-3-phosphate + CoA. It catalyses the reaction (9Z,12Z)-octadecadienoyl-CoA + sn-glycerol 3-phosphate = 1-(9Z,12Z)-octadecadienoyl-sn-glycero-3-phosphate + CoA. Its pathway is phospholipid metabolism; CDP-diacylglycerol biosynthesis; CDP-diacylglycerol from sn-glycerol 3-phosphate: step 1/3. With respect to regulation, inhibited by N-ethylmaleimide (NEM). Its function is as follows. Converts glycerol-3-phosphate to 1-acyl-sn-glycerol-3-phosphate (lysophosphatidic acid or LPA) by incorporating an acyl moiety at the sn-1 position of the glycerol backbone. Active against both saturated and unsaturated long-chain fatty acyl-CoAs. Protects cells against lipotoxicity. The protein is Glycerol-3-phosphate acyltransferase 4 of Homo sapiens (Human).